A 372-amino-acid polypeptide reads, in one-letter code: Nucleosome assembly protein 1;1 (372 aa).

Residues valine 26 to glutamate 80 are a coiled coil. Serine 41 carries the phosphoserine modification. Positions leucine 47 to glutamine 62 match the Nuclear export signal motif. The Nuclear localization signal signature appears at lysine 223–lysine 228. The disordered stretch occupies residues alanine 299 to glutamine 372. Acidic residues predominate over residues methionine 300 to glutamate 337. A compositionally biased stretch (basic and acidic residues) spans glycine 360–glutamine 372. Cysteine methyl ester is present on cysteine 369. Cysteine 369 carries the S-farnesyl cysteine lipid modification. The propeptide at lysine 370 to glutamine 372 is removed in mature form.

It belongs to the nucleosome assembly protein (NAP) family. Can form homomeric and heteromeric protein complexes with NAP1;2, NAP1;3 and NAP1;4. Binds histone H2A. Interacts with PP438/PNM1. In terms of processing, prenylation of the protein is required for its function during the cell proliferation phase of leaf development. Ubiquitous.

The protein resides in the nucleus. The protein localises to the cytoplasm. May modulate chromatin structure by regulation of nucleosome assembly/disassembly. Contributes to the regulation of cell proliferation and cell expansion. May function in nucleotide excision repair (NER). Involved in somatic homologous recombination. This chain is Nucleosome assembly protein 1;1 (NAP1;1), found in Arabidopsis thaliana (Mouse-ear cress).